Consider the following 209-residue polypeptide: Ribosomal RNA large subunit methyltransferase E (209 aa).

S-adenosyl-L-methionine-binding residues include Gly63, Trp65, Asp83, Asp99, and Asp124. Lys164 functions as the Proton acceptor in the catalytic mechanism.

Belongs to the class I-like SAM-binding methyltransferase superfamily. RNA methyltransferase RlmE family.

Its subcellular location is the cytoplasm. The enzyme catalyses uridine(2552) in 23S rRNA + S-adenosyl-L-methionine = 2'-O-methyluridine(2552) in 23S rRNA + S-adenosyl-L-homocysteine + H(+). Its function is as follows. Specifically methylates the uridine in position 2552 of 23S rRNA at the 2'-O position of the ribose in the fully assembled 50S ribosomal subunit. This chain is Ribosomal RNA large subunit methyltransferase E, found in Shigella dysenteriae serotype 1 (strain Sd197).